Here is a 1214-residue protein sequence, read N- to C-terminus: [F-actin]-monooxygenase mical1 (1214 aa).

Residues 1-488 (MVNPLDSVNP…KRLYEAEEQE (488 aa)) form a monooxygenase domain region. FAD is bound by residues cysteine 96, 115–117 (EKR), 122–124 (RNN), phenylalanine 182, tyrosine 292, and aspartate 392. Positions 484–505 (AEEQESKPNKLKKPDIKAKPRK) are disordered. The Calponin-homology (CH) domain occupies 508–614 (MKRLEELLSW…YLTQIRNALT (107 aa)). The disordered stretch occupies residues 649–676 (HKDRLASVKGPRQQNMKEKEEKKDVKEE). Residues 663–676 (NMKEKEEKKDVKEE) show a composition bias toward basic and acidic residues. Residues 686 to 748 (EPCYFCKKHL…ELHSLAEEEE (63 aa)) form the LIM zinc-binding domain. 8 residues coordinate Zn(2+): cysteine 688, cysteine 691, histidine 709, cysteine 712, cysteine 715, cysteine 718, cysteine 738, and histidine 741. Residues 747-1019 (EEGDEGHGGA…DDEDEDEEDL (273 aa)) are disordered. Acidic residues predominate over residues 796–815 (PDFDESTEFPAPDQDEPPDL). Polar residues predominate over residues 828–841 (SAENTNMENQQHNI). The segment covering 910–922 (RGSSSAASTSSSS) has biased composition (low complexity). Over residues 974-987 (SPWNLSSPRLQQRF) the composition is skewed to polar residues. Over residues 1003 to 1019 (VSEDDNEDDEDEDEEDL) the composition is skewed to acidic residues. The region spanning 1053–1199 (KMTEIQRFHK…EVNDQFNSSL (147 aa)) is the bMERB domain. A coiled-coil region spans residues 1061–1131 (HKAQSIQRRL…DLMVASRQLE (71 aa)). The interval 1194–1214 (QFNSSLDAKRRSTTASQVHWE) is disordered.

The protein belongs to the Mical family. Requires FAD as cofactor.

It localises to the cytoplasm. It is found in the cytoskeleton. The protein resides in the midbody. Its subcellular location is the endosome membrane. It catalyses the reaction L-methionyl-[F-actin] + NADPH + O2 + H(+) = L-methionyl-(R)-S-oxide-[F-actin] + NADP(+) + H2O. The catalysed reaction is NADPH + O2 + H(+) = H2O2 + NADP(+). In terms of biological role, monooxygenase that promotes depolymerization of F-actin by mediating oxidation of specific methionine residues on actin to form methionine-sulfoxide, resulting in actin filament disassembly and prevent repolymerization. May be involved in endosomal tubule extension and neosynthesized protein export. The protein is [F-actin]-monooxygenase mical1 (mical1) of Danio rerio (Zebrafish).